The following is a 208-amino-acid chain: GATA transcription factor 20 (208 aa).

A GATA-type zinc finger spans residues 94 to 119; it reads CASCDTTSTPLWRNGPKGPKSLCNAC.

The protein belongs to the type IV zinc-finger family. Class B subfamily.

The protein resides in the nucleus. Transcriptional regulator that specifically binds 5'-GATA-3' or 5'-GAT-3' motifs within gene promoters. The polypeptide is GATA transcription factor 20 (Arabidopsis thaliana (Mouse-ear cress)).